The following is a 369-amino-acid chain: Maltose/maltodextrin import ATP-binding protein MalK (369 aa).

The ABC transporter domain occupies 4 to 234; the sequence is VTLHNVSKAY…PVNRFVASFI (231 aa). 36 to 43 contributes to the ATP binding site; it reads GPSGCGKS.

It belongs to the ABC transporter superfamily. Maltooligosaccharide importer (TC 3.A.1.1.1) family. As to quaternary structure, the complex is composed of two ATP-binding proteins (MalK), two transmembrane proteins (MalG and MalK) and a solute-binding protein (MalE).

The protein localises to the cell inner membrane. It carries out the reaction D-maltose(out) + ATP + H2O = D-maltose(in) + ADP + phosphate + H(+). In terms of biological role, part of the ABC transporter complex MalEFGK involved in maltose/maltodextrin import. Responsible for energy coupling to the transport system. This chain is Maltose/maltodextrin import ATP-binding protein MalK, found in Photorhabdus laumondii subsp. laumondii (strain DSM 15139 / CIP 105565 / TT01) (Photorhabdus luminescens subsp. laumondii).